Reading from the N-terminus, the 266-residue chain is UPF0328 protein ECU03_0130 (266 aa).

It belongs to the UPF0328 family.

The sequence is that of UPF0328 protein ECU03_0130 from Encephalitozoon cuniculi (strain GB-M1) (Microsporidian parasite).